The chain runs to 1105 residues: SWI/SNF complex subunit SMARCC1 (1105 aa).

An N-acetylalanine modification is found at alanine 2. Residues 28 to 302 (LAVYRRKDGG…PVSFRQRIST (275 aa)) are marR-like, BRCT and chromo domains module. The region spanning 38-164 (PATKFWESPE…IEKTLVQNNC (127 aa)) is the MarR-like domain. The region spanning 168–211 (PNIYLIPDIDLKLANKLKDIIKRHQGTFTDEKSKASHHIYPYSS) is the BRCT; N-terminus domain. Lysine 179 is covalently cross-linked (Glycyl lysine isopeptide (Lys-Gly) (interchain with G-Cter in SUMO2)). The Chromo domain maps to 217–245 (EWLRPVMRKEKQVLVHWGFYPDSYDTWVH). Residues 261 to 285 (KPWKVHVKWILDTDIFNEWMNEEDY) enclose the BRCT; C-terminus domain. Residues 296-439 (FRQRISTKNE…DQSRSVDLGE (144 aa)) form a disordered region. The segment covering 302–318 (TKNEEPVRSPERRDRKA) has biased composition (basic and acidic residues). 3 positions are modified to phosphoserine: serine 310, serine 328, and serine 330. The residue at position 335 (threonine 335) is a Phosphothreonine. Lysine 345 and lysine 346 each carry N6-acetyllysine. Phosphoserine is present on serine 350. Residue lysine 354 is modified to N6-acetyllysine. Serine 357 is subject to Phosphoserine. Lysine 359 is modified (N6-acetyllysine; alternate). Residue lysine 359 forms a Glycyl lysine isopeptide (Lys-Gly) (interchain with G-Cter in SUMO2); alternate linkage. Residue threonine 398 is modified to Phosphothreonine. Positions 449-546 (IIIPSYASWF…YQVDPESRPM (98 aa)) constitute an SWIRM domain. At serine 573 the chain carries Phosphoserine. A Glycyl lysine isopeptide (Lys-Gly) (interchain with G-Cter in SUMO2) cross-link involves residue lysine 592. The region spanning 618-669 (SAGREWTEQETLLLLEALEMYKDDWNKVSEHVGSRTQDECILHFLRLPIEDP) is the SANT domain. Lysine 739 participates in a covalent cross-link: Glycyl lysine isopeptide (Lys-Gly) (interchain with G-Cter in SUMO2). The interval 745 to 860 (ARASGKVDPT…DTGKKKVEHE (116 aa)) is disordered. Over residues 776–785 (AEEEKMEADP) the composition is skewed to acidic residues. Residues 789 to 860 (QPEKAENKVE…DTGKKKVEHE (72 aa)) are compositionally biased toward basic and acidic residues. Residue lysine 796 forms a Glycyl lysine isopeptide (Lys-Gly) (interchain with G-Cter in SUMO2) linkage. A phosphoserine mark is found at serine 822 and serine 825. Residues lysine 829 and lysine 856 each participate in a glycyl lysine isopeptide (Lys-Gly) (interchain with G-Cter in SUMO2) cross-link. The stretch at 914-946 (FEELETIMDREKEALEQQRQQLLTERQNFHMEQ) forms a coiled coil. The residue at position 948 (lysine 948) is an N6-acetyllysine. Disordered stretches follow at residues 956 to 1028 (QQME…PGQH) and 1041 to 1105 (IHPS…SAAP). Residues 957–993 (QMEQQQHGQNPQQAHQHSGGPGLAPLGAAGHPGMMPH) are compositionally biased toward low complexity. Composition is skewed to pro residues over residues 994 to 1017 (QQPPPYPLMHHQMPPPHPPQPGQI) and 1048 to 1057 (PTPPGMPPMP). Arginine 1064 is modified (asymmetric dimethylarginine). Over residues 1073–1105 (MYPPPPQQQPPPPPPADGVPPPPAPGPPASAAP) the composition is skewed to pro residues.

Belongs to the SMARCC family. Component of the multiprotein chromatin-remodeling complexes SWI/SNF: SWI/SNF-A (BAF), SWI/SNF-B (PBAF) and related complexes. The canonical complex contains a catalytic subunit (either SMARCA4/BRG1/BAF190A or SMARCA2/BRM/BAF190B) and at least SMARCE1, ACTL6A/BAF53, SMARCC1/BAF155, SMARCC2/BAF170, and SMARCB1/SNF5/BAF47. Other subunits specific to each of the complexes may also be present permitting several possible combinations developmentally and tissue specific. Component of the BAF complex, which includes at least actin (ACTB), ARID1A/BAF250A, ARID1B/BAF250B, SMARCA2/BRM, SMARCA4/BRG1, ACTL6A/BAF53, ACTL6B/BAF53B, SMARCE1/BAF57, SMARCC1/BAF155, SMARCC2/BAF170, SMARCB1/SNF5/INI1, and one or more SMARCD1/BAF60A, SMARCD2/BAF60B, or SMARCD3/BAF60C. In muscle cells, the BAF complex also contains DPF3. Component of neural progenitors-specific chromatin remodeling complex (npBAF complex) composed of at least, ARID1A/BAF250A or ARID1B/BAF250B, SMARCD1/BAF60A, SMARCD3/BAF60C, SMARCA2/BRM/BAF190B, SMARCA4/BRG1/BAF190A, SMARCB1/BAF47, SMARCC1/BAF155, SMARCE1/BAF57, SMARCC2/BAF170, PHF10/BAF45A, ACTL6A/BAF53A and actin. Component of neuron-specific chromatin remodeling complex (nBAF complex) composed of at least, ARID1A/BAF250A or ARID1B/BAF250B, SMARCD1/BAF60A, SMARCD3/BAF60C, SMARCA2/BRM/BAF190B, SMARCA4/BRG1/BAF190A, SMARCB1/BAF47, SMARCC1/BAF155, SMARCE1/BAF57, SMARCC2/BAF170, DPF1/BAF45B, DPF3/BAF45C, ACTL6B/BAF53B and actin. Component of the SWI/SNF-B (PBAF) chromatin remodeling complex, at least composed of SMARCA4/BRG1, SMARCB1/BAF47/SNF5, ACTL6A/BAF53A or ACTL6B/BAF53B, SMARCE1/BAF57, SMARCD1/BAF60A, SMARCD2/BAF60B, perhaps SMARCD3/BAF60C, SMARCC1/BAF155, SMARCC2/BAF170, PBRM1/BAF180, ARID2/BAF200 and actin. Component of SWI/SNF (GBAF) subcomplex, which includes at least BICRA or BICRAL (mutually exclusive), BRD9, SS18, SMARCA2/BRM, SMARCA4/BRG1/BAF190A, ACTL6A/BAF53, SMARCC1/BAF155, and SMARCD1/BAF60A. May also interact with the SIN3A histone deacetylase transcription repressor complex in conjunction with SMARCA2 and SMARCA4. The minimal complex composed of SMARCC1 and SMARCA4 seems to be able to associate with cyclin such as CCNE1 or transcription factors such as KLF1 or GATA1. Interacts with NR3C1 and SMARD1. Interacts with TRIP12; leading to disrupt interaction between TRIP12 and SMARCE1 and prevent SMARCE1 ubiquitination. Interacts with CEBPB (when not methylated). Interacts with KDM6B. Interacts with MKKS; the interaction takes place predominantly in the cytoplasm and may modulate SMARCC1 location. Interacts with DPF2. Interacts with PRDM1/BLIMP1. Interacts with DPF3a (isoform 2 of DPF3/BAF45C) and with HDGFL2 in a DPF3a-dependent manner. Post-translationally, phosphorylated on undefined residues at the G2/M transition by ERK1 and other kinases. This may contribute to cell cycle specific inactivation of remodeling complexes containing the phosphorylated protein. In terms of tissue distribution, expressed in brain, heart, muscle, placenta, lung, liver, muscle, kidney and pancreas.

It localises to the nucleus. It is found in the cytoplasm. Functionally, involved in transcriptional activation and repression of select genes by chromatin remodeling (alteration of DNA-nucleosome topology). Component of SWI/SNF chromatin remodeling complexes that carry out key enzymatic activities, changing chromatin structure by altering DNA-histone contacts within a nucleosome in an ATP-dependent manner. May stimulate the ATPase activity of the catalytic subunit of the complex. Belongs to the neural progenitors-specific chromatin remodeling complex (npBAF complex) and the neuron-specific chromatin remodeling complex (nBAF complex). During neural development a switch from a stem/progenitor to a postmitotic chromatin remodeling mechanism occurs as neurons exit the cell cycle and become committed to their adult state. The transition from proliferating neural stem/progenitor cells to postmitotic neurons requires a switch in subunit composition of the npBAF and nBAF complexes. As neural progenitors exit mitosis and differentiate into neurons, npBAF complexes which contain ACTL6A/BAF53A and PHF10/BAF45A, are exchanged for homologous alternative ACTL6B/BAF53B and DPF1/BAF45B or DPF3/BAF45C subunits in neuron-specific complexes (nBAF). The npBAF complex is essential for the self-renewal/proliferative capacity of the multipotent neural stem cells. The nBAF complex along with CREST plays a role regulating the activity of genes essential for dendrite growth. This Homo sapiens (Human) protein is SWI/SNF complex subunit SMARCC1.